An 85-amino-acid polypeptide reads, in one-letter code: uncharacterized protein (85 aa).

Residues Met-1–Arg-85 form a disordered region. Positions Ala-47 to Gly-61 are enriched in basic and acidic residues.

This is an uncharacterized protein from Streptomyces lividans.